The chain runs to 1070 residues: RecBCD enzyme subunit RecC (1070 aa).

Belongs to the RecC family. Heterotrimer of RecB, RecC and RecD. All subunits contribute to DNA-binding.

Functionally, a helicase/nuclease that prepares dsDNA breaks (DSB) for recombinational DNA repair. Binds to DSBs and unwinds DNA via a highly rapid and processive ATP-dependent bidirectional helicase activity. Unwinds dsDNA until it encounters a Chi (crossover hotspot instigator) sequence from the 3' direction. Cuts ssDNA a few nucleotides 3' to the Chi site. The properties and activities of the enzyme are changed at Chi. The Chi-altered holoenzyme produces a long 3'-ssDNA overhang and facilitates RecA-binding to the ssDNA for homologous DNA recombination and repair. Holoenzyme degrades any linearized DNA that is unable to undergo homologous recombination. In the holoenzyme this subunit recognizes the wild-type Chi sequence, and when added to isolated RecB increases its ATP-dependent helicase processivity. The polypeptide is RecBCD enzyme subunit RecC (Buchnera aphidicola subsp. Acyrthosiphon pisum (strain APS) (Acyrthosiphon pisum symbiotic bacterium)).